We begin with the raw amino-acid sequence, 186 residues long: uncharacterized protein (186 aa).

Positions 1–181 constitute a Macro domain; sequence MVSFSYKGNL…TFVSLASDFL (181 aa).

The protein belongs to the MacroD-type family.

This is an uncharacterized protein from Thermoplasma volcanium (strain ATCC 51530 / DSM 4299 / JCM 9571 / NBRC 15438 / GSS1).